The primary structure comprises 180 residues: Decaprenylphosphoryl-5-phosphoribose phosphatase (180 aa).

4 consecutive transmembrane segments (helical) span residues 31–51 (ALSH…AGAL), 61–81 (LAVG…KRVV), 116–136 (VLLA…PMAL), and 139–159 (LVLG…GALV).

It belongs to the PA-phosphatase related phosphoesterase family.

The protein localises to the cell membrane. The enzyme catalyses trans,octa-cis-decaprenylphospho-beta-D-ribofuranose 5-phosphate + H2O = trans,octa-cis-decaprenylphospho-beta-D-ribofuranose + phosphate. It functions in the pathway cell wall biogenesis; cell wall polysaccharide biosynthesis. Functionally, phosphatase involved in the biosynthesis of decaprenylphosphoryl arabinose (DPA), which serves as the arabinose donor for the biosynthesis of arabinogalactan, the major mycobacterial cell wall polysaccharide. Catalyzes the dephosphorylation of decaprenylphosphoryl-5-phosphoribose (DPPR) to decaprenyl-phosphoribose (DPR). This chain is Decaprenylphosphoryl-5-phosphoribose phosphatase, found in Mycolicibacterium smegmatis (strain ATCC 700084 / mc(2)155) (Mycobacterium smegmatis).